A 206-amino-acid chain; its full sequence is LexA repressor (206 aa).

A DNA-binding region (H-T-H motif) is located at residues 28–48 (RAEIARELGFRSANAAEEHLK). Active-site for autocatalytic cleavage activity residues include Ser123 and Lys160.

Belongs to the peptidase S24 family. In terms of assembly, homodimer.

It catalyses the reaction Hydrolysis of Ala-|-Gly bond in repressor LexA.. In terms of biological role, represses a number of genes involved in the response to DNA damage (SOS response), including recA and lexA. In the presence of single-stranded DNA, RecA interacts with LexA causing an autocatalytic cleavage which disrupts the DNA-binding part of LexA, leading to derepression of the SOS regulon and eventually DNA repair. The chain is LexA repressor from Vibrio parahaemolyticus serotype O3:K6 (strain RIMD 2210633).